The sequence spans 619 residues: Putative zinc transporter At3g08650 (619 aa).

The next 15 helical transmembrane spans lie at 25-45 (MMHS…VVFI), 102-122 (VALF…PFFF), 129-149 (WAGI…FDLV), 155-175 (HGSG…IWLC), 198-218 (VVLV…GVGV), 230-250 (LLVT…VSMV), 261-281 (AMLW…PAFL), 289-309 (FLPF…IAEV), 354-374 (GFFV…FLVA), 383-403 (HALL…WRPL), 405-425 (LLLS…IGAG), 465-485 (LLAC…LGVA), 528-548 (AAAL…LAGI), 552-572 (GLDH…WQVI), and 585-605 (VGMV…RLVC).

The protein belongs to the ZIP transporter (TC 2.A.5) family. ZupT subfamily.

The protein resides in the membrane. Functionally, may transport zinc. The sequence is that of Putative zinc transporter At3g08650 from Arabidopsis thaliana (Mouse-ear cress).